The primary structure comprises 229 residues: Large ribosomal subunit protein uL1 (229 aa).

Part of the 50S ribosomal subunit.

Functionally, binds directly to 23S rRNA. The L1 stalk is quite mobile in the ribosome, and is involved in E site tRNA release. In terms of biological role, protein L1 is also a translational repressor protein, it controls the translation of the L11 operon by binding to its mRNA. The chain is Large ribosomal subunit protein uL1 from Rhodopseudomonas palustris (strain ATCC BAA-98 / CGA009).